The chain runs to 697 residues: Elongation factor G (697 aa).

A tr-type G domain is found at 8 to 283; sequence ERMRNIGIAA…AVVDYLPSPL (276 aa). Residues 17–24, 81–85, and 135–138 each bind GTP; these read AHIDAGKT, DTPGH, and NKMD.

Belongs to the TRAFAC class translation factor GTPase superfamily. Classic translation factor GTPase family. EF-G/EF-2 subfamily.

Its subcellular location is the cytoplasm. Catalyzes the GTP-dependent ribosomal translocation step during translation elongation. During this step, the ribosome changes from the pre-translocational (PRE) to the post-translocational (POST) state as the newly formed A-site-bound peptidyl-tRNA and P-site-bound deacylated tRNA move to the P and E sites, respectively. Catalyzes the coordinated movement of the two tRNA molecules, the mRNA and conformational changes in the ribosome. In Solibacter usitatus (strain Ellin6076), this protein is Elongation factor G.